The sequence spans 70 residues: MTDETFADRIDALEMRATYQEEAIETLNQVVTTQWKQIDALMRQIAEIGERLREAEAARPAPANEPPPHY.

This sequence belongs to the SlyX family.

The polypeptide is Protein SlyX homolog (Nitrobacter winogradskyi (strain ATCC 25391 / DSM 10237 / CIP 104748 / NCIMB 11846 / Nb-255)).